Here is a 421-residue protein sequence, read N- to C-terminus: MSKTHLTEQKFSDFALHPKVIEALENKGFHNCTPIQALALPLTLAGRDVAGQAQTGTGKTMAFLTSSFHYLLSHPAIDDRKVNQPRALIMAPTRELAVQIHADAEPLAQTTGLKLGLAYGGDGYDKQLKVLESGVDILIGTTGRLIDYAKQNHINLGAIQVVVLDEADRMYDLGFIKDIRWLFRRMPPANQRLNMLFSATLSYRVRELAFEQMNNAEYVEVEPEQKTGHRIKEELFYPSNEEKMRLLQTLIEEEWPDRAIVFANTKHRCEDIWGHLAADGHRVGLLTGDVAQKKRLRILDEFTRGDLDILVATDVAARGLHIPAVTHVFNYDLPDDCEDYVHRIGRTGRAGASGHSISLACEEYALNLPAIEAYIGHSIPVSKYNPEALMTNLPKPLRLTRSRPGNGPRRTGAPRNRRRSG.

The short motif at 9 to 37 (QKFSDFALHPKVIEALENKGFHNCTPIQA) is the Q motif element. A Helicase ATP-binding domain is found at 40-219 (LPLTLAGRDV…FEQMNNAEYV (180 aa)). Residue 53–60 (AQTGTGKT) participates in ATP binding. A DEAD box motif is present at residues 165 to 168 (DEAD). The 146-residue stretch at 245-390 (RLLQTLIEEE…VSKYNPEALM (146 aa)) folds into the Helicase C-terminal domain. The interval 393-421 (LPKPLRLTRSRPGNGPRRTGAPRNRRRSG) is disordered. A compositionally biased stretch (low complexity) spans 403–414 (RPGNGPRRTGAP).

This sequence belongs to the DEAD box helicase family. RhlB subfamily. As to quaternary structure, component of the RNA degradosome, which is a multiprotein complex involved in RNA processing and mRNA degradation.

It localises to the cytoplasm. The enzyme catalyses ATP + H2O = ADP + phosphate + H(+). DEAD-box RNA helicase involved in RNA degradation. Has RNA-dependent ATPase activity and unwinds double-stranded RNA. This is ATP-dependent RNA helicase RhlB from Citrobacter koseri (strain ATCC BAA-895 / CDC 4225-83 / SGSC4696).